A 480-amino-acid polypeptide reads, in one-letter code: tRNA-2-methylthio-N(6)-dimethylallyladenosine synthase (480 aa).

The region spanning 29–145 (GSFWIQTFGC…LEALLTQVDN (117 aa)) is the MTTase N-terminal domain. 6 residues coordinate [4Fe-4S] cluster: cysteine 38, cysteine 74, cysteine 108, cysteine 180, cysteine 184, and cysteine 187. In terms of domain architecture, Radical SAM core spans 166–403 (RDSTICAWVN…NALVERVALQ (238 aa)). One can recognise a TRAM domain in the interval 406–474 (SRYSGKVEQV…AFSLSGTPCD (69 aa)).

This sequence belongs to the methylthiotransferase family. MiaB subfamily. As to quaternary structure, monomer. The cofactor is [4Fe-4S] cluster.

The protein localises to the cytoplasm. The enzyme catalyses N(6)-dimethylallyladenosine(37) in tRNA + (sulfur carrier)-SH + AH2 + 2 S-adenosyl-L-methionine = 2-methylsulfanyl-N(6)-dimethylallyladenosine(37) in tRNA + (sulfur carrier)-H + 5'-deoxyadenosine + L-methionine + A + S-adenosyl-L-homocysteine + 2 H(+). Its function is as follows. Catalyzes the methylthiolation of N6-(dimethylallyl)adenosine (i(6)A), leading to the formation of 2-methylthio-N6-(dimethylallyl)adenosine (ms(2)i(6)A) at position 37 in tRNAs that read codons beginning with uridine. This is tRNA-2-methylthio-N(6)-dimethylallyladenosine synthase from Prochlorococcus marinus (strain MIT 9303).